We begin with the raw amino-acid sequence, 121 residues long: UPF0145 protein SAV_4658 (121 aa).

The protein belongs to the UPF0145 family.

This Streptomyces avermitilis (strain ATCC 31267 / DSM 46492 / JCM 5070 / NBRC 14893 / NCIMB 12804 / NRRL 8165 / MA-4680) protein is UPF0145 protein SAV_4658.